Consider the following 545-residue polypeptide: Chaperonin GroEL 2 (545 aa).

Residues 29–32 (TLGP), 86–90 (DGTTT), G413, 477–479 (DAA), and D493 each bind ATP. Residues 526–545 (PEPAAAGHGHGHGHQHGPGF) form a disordered region. Residues 534-545 (GHGHGHQHGPGF) are compositionally biased toward basic residues.

It belongs to the chaperonin (HSP60) family. In terms of assembly, forms a cylinder of 14 subunits composed of two heptameric rings stacked back-to-back. Interacts with the co-chaperonin GroES.

It is found in the cytoplasm. It carries out the reaction ATP + H2O + a folded polypeptide = ADP + phosphate + an unfolded polypeptide.. Its function is as follows. Together with its co-chaperonin GroES, plays an essential role in assisting protein folding. The GroEL-GroES system forms a nano-cage that allows encapsulation of the non-native substrate proteins and provides a physical environment optimized to promote and accelerate protein folding. The protein is Chaperonin GroEL 2 of Salinispora arenicola (strain CNS-205).